The sequence spans 284 residues: Phosphate import ATP-binding protein PstB 2 (284 aa).

The segment covering 1–22 has biased composition (polar residues); it reads MTLLSTLRGISSPARQQPGTQS. Residues 1 to 29 are disordered; that stretch reads MTLLSTLRGISSPARQQPGTQSESRRGGD. Positions 36-278 constitute an ABC transporter domain; it reads LAVAGVSHGF…PDDARARKFI (243 aa). Residue 68-75 coordinates ATP; sequence GPSGTGKT.

Belongs to the ABC transporter superfamily. Phosphate importer (TC 3.A.1.7) family. The complex is composed of two ATP-binding proteins (PstB), two transmembrane proteins (PstC and PstA) and a solute-binding protein (PstS).

Its subcellular location is the cell membrane. It catalyses the reaction phosphate(out) + ATP + H2O = ADP + 2 phosphate(in) + H(+). Its function is as follows. Part of the ABC transporter complex PstSACB involved in phosphate import. Responsible for energy coupling to the transport system. This chain is Phosphate import ATP-binding protein PstB 2, found in Natronomonas pharaonis (strain ATCC 35678 / DSM 2160 / CIP 103997 / JCM 8858 / NBRC 14720 / NCIMB 2260 / Gabara) (Halobacterium pharaonis).